Reading from the N-terminus, the 331-residue chain is Adenosine deaminase (331 aa).

The Zn(2+) site is built by His12 and His14. His14, Asp16, and Gly170 together coordinate substrate. His197 contributes to the Zn(2+) binding site. Glu200 functions as the Proton donor in the catalytic mechanism. A Zn(2+)-binding site is contributed by Asp278. Asp279 lines the substrate pocket.

Belongs to the metallo-dependent hydrolases superfamily. Adenosine and AMP deaminases family. Adenosine deaminase subfamily. The cofactor is Zn(2+).

The enzyme catalyses adenosine + H2O + H(+) = inosine + NH4(+). The catalysed reaction is 2'-deoxyadenosine + H2O + H(+) = 2'-deoxyinosine + NH4(+). Its function is as follows. Catalyzes the hydrolytic deamination of adenosine and 2-deoxyadenosine. In Shewanella sp. (strain MR-7), this protein is Adenosine deaminase.